Consider the following 203-residue polypeptide: Small ribosomal subunit protein uS7 (203 aa).

Residues 1-22 are disordered; the sequence is MSESEAPEPDQPAGAEEATGAK.

Belongs to the universal ribosomal protein uS7 family. Part of the 30S ribosomal subunit.

In terms of biological role, one of the primary rRNA binding proteins, it binds directly to 16S rRNA where it nucleates assembly of the head domain of the 30S subunit. Is located at the subunit interface close to the decoding center. This chain is Small ribosomal subunit protein uS7, found in Halococcus morrhuae (Micrococcus morrhuae).